The chain runs to 577 residues: Cleavage stimulation factor subunit 2 (577 aa).

A Phosphoserine modification is found at S14. Positions 16–94 (RSVFVGNIPY…RALRVDNAAS (79 aa)) constitute an RRM domain. Positions 108–248 (APVIESPYGE…VNGAPPLMQA (141 aa)) are interactions with CSTF3 and SYMPK. Residue K189 forms a Glycyl lysine isopeptide (Lys-Gly) (interchain with G-Cter in SUMO2) linkage. Positions 207 to 230 (PVHGAGPGSGSNVSMNQQNPQAPQ) are disordered. An Omega-N-methylarginine modification is found at R308. The segment at 319–409 (RGLLGDAPND…DGRGGRDPRG (91 aa)) is disordered. The segment covering 360–373 (PGHESRGPPPHELR) has biased composition (basic and acidic residues). One copy of the 1; approximate repeat lies at 410–414 (IDARG). The 12 X 5 AA tandem repeats of M-E-A-R-[AG] stretch occupies residues 410 to 469 (IDARGMEARAMEARGLDARGLEARAMEARAMEARAMEARAMEARAMEVRGMEARGMDTRG). Repeat copies occupy residues 415–419 (MEARA) and 420–424 (MEARG). Residues 425–429 (LDARG) form a 4; approximate repeat. One copy of the 5; approximate repeat lies at 430–434 (LEARA). Tandem repeats lie at residues 435-439 (MEARA), 440-444 (MEARA), 445-449 (MEARA), and 450-454 (MEARA). One copy of the 10; approximate repeat lies at 455-459 (MEVRG). Repeat unit 11 spans residues 460 to 464 (MEARG). A 12; approximate repeat occupies 465-469 (MDTRG). R468 and R475 each carry omega-N-methylarginine. Residues 509-532 (LQGASIQGGSQPGGFSPGQNQVTP) form a disordered region. The segment at 514–577 (IQGGSQPGGF…EQIQKSTGAP (64 aa)) is interaction with RPO2TC1. Phosphoserine is present on residues S518 and S524.

The CSTF complex is composed of CSTF1 (50 kDa subunit), CSTF2 (64 kDa subunit) and CSTF3 (77 kDa subunit). CSTF2 directly interacts with CSTF3, SYMPK and RPO2TC1. Interacts with HSF1 in heat-stressed cells. Interacts with CPSF2, CPSF3 and FIP1L1. Interacts with DDX1.

Its subcellular location is the nucleus. Its function is as follows. One of the multiple factors required for polyadenylation and 3'-end cleavage of mammalian pre-mRNAs. This subunit is directly involved in the binding to pre-mRNAs. This is Cleavage stimulation factor subunit 2 (CSTF2) from Pongo abelii (Sumatran orangutan).